A 377-amino-acid polypeptide reads, in one-letter code: GTP 3',8-cyclase (377 aa).

Residues 1 to 29 (MTTRLYLSPTPPRNDREGASKSTSASIKH) are disordered. The Radical SAM core domain maps to 45 to 271 (RFGRIARDLR…FTLSPAKEPR (227 aa)). Arg54 contacts GTP. Cys61 and Cys65 together coordinate [4Fe-4S] cluster. Tyr67 contacts S-adenosyl-L-methionine. Cys68 contacts [4Fe-4S] cluster. A GTP-binding site is contributed by Arg105. Residue Gly109 coordinates S-adenosyl-L-methionine. Residue Thr140 participates in GTP binding. An S-adenosyl-L-methionine-binding site is contributed by Ser164. Position 201 (Lys201) interacts with GTP. Position 235 (Met235) interacts with S-adenosyl-L-methionine. [4Fe-4S] cluster is bound by residues Cys304 and Cys307. 309-311 (RSR) provides a ligand contact to GTP. Residue Cys321 coordinates [4Fe-4S] cluster.

It belongs to the radical SAM superfamily. MoaA family. As to quaternary structure, monomer and homodimer. It depends on [4Fe-4S] cluster as a cofactor.

It carries out the reaction GTP + AH2 + S-adenosyl-L-methionine = (8S)-3',8-cyclo-7,8-dihydroguanosine 5'-triphosphate + 5'-deoxyadenosine + L-methionine + A + H(+). It participates in cofactor biosynthesis; molybdopterin biosynthesis. Its function is as follows. Catalyzes the cyclization of GTP to (8S)-3',8-cyclo-7,8-dihydroguanosine 5'-triphosphate. The chain is GTP 3',8-cyclase from Corynebacterium glutamicum (strain ATCC 13032 / DSM 20300 / JCM 1318 / BCRC 11384 / CCUG 27702 / LMG 3730 / NBRC 12168 / NCIMB 10025 / NRRL B-2784 / 534).